The following is a 420-amino-acid chain: Glutamyl-tRNA reductase (420 aa).

Substrate-binding positions include 49 to 52 (TCNR), Ser-109, 114 to 116 (EPQ), and Gln-120. The active-site Nucleophile is the Cys-50. Position 189 to 194 (189 to 194 (GAGETI)) interacts with NADP(+).

The protein belongs to the glutamyl-tRNA reductase family. As to quaternary structure, homodimer.

The catalysed reaction is (S)-4-amino-5-oxopentanoate + tRNA(Glu) + NADP(+) = L-glutamyl-tRNA(Glu) + NADPH + H(+). The protein operates within porphyrin-containing compound metabolism; protoporphyrin-IX biosynthesis; 5-aminolevulinate from L-glutamyl-tRNA(Glu): step 1/2. Its function is as follows. Catalyzes the NADPH-dependent reduction of glutamyl-tRNA(Glu) to glutamate 1-semialdehyde (GSA). In Edwardsiella ictaluri (strain 93-146), this protein is Glutamyl-tRNA reductase.